A 198-amino-acid polypeptide reads, in one-letter code: Large ribosomal subunit protein bL25 (198 aa).

This sequence belongs to the bacterial ribosomal protein bL25 family. CTC subfamily. In terms of assembly, part of the 50S ribosomal subunit; part of the 5S rRNA/L5/L18/L25 subcomplex. Contacts the 5S rRNA. Binds to the 5S rRNA independently of L5 and L18.

Functionally, this is one of the proteins that binds to the 5S RNA in the ribosome where it forms part of the central protuberance. This Pseudomonas putida (strain W619) protein is Large ribosomal subunit protein bL25.